The sequence spans 449 residues: Glutamyl-tRNA reductase (449 aa).

Residues 58–61 (TCNR), Ser-121, 126–128 (ETQ), and Gln-132 each bind substrate. The active-site Nucleophile is the Cys-59. Residue 203-208 (GLGEMA) participates in NADP(+) binding.

This sequence belongs to the glutamyl-tRNA reductase family. Homodimer.

It catalyses the reaction (S)-4-amino-5-oxopentanoate + tRNA(Glu) + NADP(+) = L-glutamyl-tRNA(Glu) + NADPH + H(+). It functions in the pathway porphyrin-containing compound metabolism; protoporphyrin-IX biosynthesis; 5-aminolevulinate from L-glutamyl-tRNA(Glu): step 1/2. Functionally, catalyzes the NADPH-dependent reduction of glutamyl-tRNA(Glu) to glutamate 1-semialdehyde (GSA). This is Glutamyl-tRNA reductase from Helicobacter pylori (strain Shi470).